A 126-amino-acid chain; its full sequence is Large ribosomal subunit protein bL12 (126 aa).

The protein belongs to the bacterial ribosomal protein bL12 family. As to quaternary structure, homodimer. Part of the ribosomal stalk of the 50S ribosomal subunit. Forms a multimeric L10(L12)X complex, where L10 forms an elongated spine to which 2 to 4 L12 dimers bind in a sequential fashion. Binds GTP-bound translation factors.

Functionally, forms part of the ribosomal stalk which helps the ribosome interact with GTP-bound translation factors. Is thus essential for accurate translation. This is Large ribosomal subunit protein bL12 from Koribacter versatilis (strain Ellin345).